The following is a 600-amino-acid chain: Elongation factor 4 (600 aa).

A tr-type G domain is found at 3-185 (KYIRNFSIIA…CLIHDIPHPQ (183 aa)). GTP is bound by residues 15-20 (DHGKST) and 132-135 (NKID).

Belongs to the TRAFAC class translation factor GTPase superfamily. Classic translation factor GTPase family. LepA subfamily.

The protein localises to the cell inner membrane. The catalysed reaction is GTP + H2O = GDP + phosphate + H(+). Its function is as follows. Required for accurate and efficient protein synthesis under certain stress conditions. May act as a fidelity factor of the translation reaction, by catalyzing a one-codon backward translocation of tRNAs on improperly translocated ribosomes. Back-translocation proceeds from a post-translocation (POST) complex to a pre-translocation (PRE) complex, thus giving elongation factor G a second chance to translocate the tRNAs correctly. Binds to ribosomes in a GTP-dependent manner. This Blochmanniella pennsylvanica (strain BPEN) protein is Elongation factor 4.